Here is a 954-residue protein sequence, read N- to C-terminus: Glycine dehydrogenase (decarboxylating) (954 aa).

N6-(pyridoxal phosphate)lysine is present on Lys704.

The protein belongs to the GcvP family. The glycine cleavage system is composed of four proteins: P, T, L and H. It depends on pyridoxal 5'-phosphate as a cofactor.

The enzyme catalyses N(6)-[(R)-lipoyl]-L-lysyl-[glycine-cleavage complex H protein] + glycine + H(+) = N(6)-[(R)-S(8)-aminomethyldihydrolipoyl]-L-lysyl-[glycine-cleavage complex H protein] + CO2. In terms of biological role, the glycine cleavage system catalyzes the degradation of glycine. The P protein binds the alpha-amino group of glycine through its pyridoxal phosphate cofactor; CO(2) is released and the remaining methylamine moiety is then transferred to the lipoamide cofactor of the H protein. This is Glycine dehydrogenase (decarboxylating) from Sinorhizobium medicae (strain WSM419) (Ensifer medicae).